We begin with the raw amino-acid sequence, 469 residues long: Receptor-type adenylate cyclase (469 aa).

Over 1 to 59 (VDTAEKLSKNGCASNYGATQISVWSMARALNASIPPLTNPMTPSMTFRNSNAGRISGVA) the chain is Extracellular. Asn-31 carries an N-linked (GlcNAc...) asparagine glycan. Residues 60-80 (LVGVIIGGALALFLVVALGVV) form a helical membrane-spanning segment. Residues 81–469 (PYFFLHNTRD…IDLENDSTTS (389 aa)) are Cytoplasmic-facing. Residues 103 to 257 (TLIFTDIESS…RTSNMAARTE (155 aa)) form the Guanylate cyclase domain. Mg(2+) contacts are provided by Asp-108 and Asp-151.

It belongs to the adenylyl cyclase class-3 family. Requires Mg(2+) as cofactor.

The protein resides in the cell membrane. The catalysed reaction is ATP = 3',5'-cyclic AMP + diphosphate. Could act as a receptor for an unknown ligand. The sequence is that of Receptor-type adenylate cyclase (ESAG4C) from Trypanosoma equiperdum.